A 53-amino-acid polypeptide reads, in one-letter code: UPF0391 membrane protein KPK_4780 (53 aa).

2 helical membrane-spanning segments follow: residues 4–24 (WGII…GGLA) and 30–47 (AAKI…VSLF).

This sequence belongs to the UPF0391 family.

It is found in the cell membrane. The protein is UPF0391 membrane protein KPK_4780 of Klebsiella pneumoniae (strain 342).